The primary structure comprises 202 residues: Small ribosomal subunit protein uS4c (202 aa).

Residues 20–43 are disordered; it reads GLTRKTTRRNSRPGQHGDQPRKPS. Residues 90 to 152 enclose the S4 RNA-binding domain; sequence MRLDNIVFRL…ARSKQLVENY (63 aa).

The protein belongs to the universal ribosomal protein uS4 family. Part of the 30S ribosomal subunit. Contacts protein S5. The interaction surface between S4 and S5 is involved in control of translational fidelity.

The protein resides in the plastid. The protein localises to the chloroplast. In terms of biological role, one of the primary rRNA binding proteins, it binds directly to 16S rRNA where it nucleates assembly of the body of the 30S subunit. Its function is as follows. With S5 and S12 plays an important role in translational accuracy. The protein is Small ribosomal subunit protein uS4c (rps4) of Rhodomonas salina (Cryptomonas salina).